Consider the following 226-residue polypeptide: Lipoprotein-releasing system ATP-binding protein LolD (226 aa).

Residues 5–226 (LKATNINKIY…LLRNGHWENY (222 aa)) form the ABC transporter domain. 41-48 (GTSGSGKS) is a binding site for ATP.

The protein belongs to the ABC transporter superfamily. Lipoprotein translocase (TC 3.A.1.125) family. In terms of assembly, the complex is composed of two ATP-binding proteins (LolD) and two transmembrane proteins (LolC and LolE).

The protein localises to the cell inner membrane. Part of the ABC transporter complex LolCDE involved in the translocation of mature outer membrane-directed lipoproteins, from the inner membrane to the periplasmic chaperone, LolA. Responsible for the formation of the LolA-lipoprotein complex in an ATP-dependent manner. The polypeptide is Lipoprotein-releasing system ATP-binding protein LolD (Psychrobacter arcticus (strain DSM 17307 / VKM B-2377 / 273-4)).